The chain runs to 154 residues: Putative pre-16S rRNA nuclease (154 aa).

Belongs to the YqgF nuclease family.

The protein resides in the cytoplasm. Could be a nuclease involved in processing of the 5'-end of pre-16S rRNA. The polypeptide is Putative pre-16S rRNA nuclease (Rickettsia rickettsii (strain Iowa)).